A 486-amino-acid chain; its full sequence is Malonate-semialdehyde dehydrogenase 1 (486 aa).

Residues phenylalanine 154, lysine 178, glutamate 181, arginine 182, and serine 231 each coordinate NAD(+). Cysteine 286 serves as the catalytic Nucleophile. Residue glutamate 386 coordinates NAD(+).

The protein belongs to the aldehyde dehydrogenase family. IolA subfamily. As to quaternary structure, homotetramer.

The enzyme catalyses 3-oxopropanoate + NAD(+) + CoA + H2O = hydrogencarbonate + acetyl-CoA + NADH + H(+). It catalyses the reaction 2-methyl-3-oxopropanoate + NAD(+) + CoA + H2O = propanoyl-CoA + hydrogencarbonate + NADH + H(+). It participates in polyol metabolism; myo-inositol degradation into acetyl-CoA; acetyl-CoA from myo-inositol: step 7/7. In terms of biological role, catalyzes the oxidation of malonate semialdehyde (MSA) and methylmalonate semialdehyde (MMSA) into acetyl-CoA and propanoyl-CoA, respectively. Is involved in a myo-inositol catabolic pathway. Bicarbonate, and not CO2, is the end-product of the enzymatic reaction. The protein is Malonate-semialdehyde dehydrogenase 1 of Bacillus thuringiensis (strain Al Hakam).